A 417-amino-acid chain; its full sequence is UDP-N-acetylglucosamine 1-carboxyvinyltransferase 2 (417 aa).

22–23 (KN) serves as a coordination point for phosphoenolpyruvate. A UDP-N-acetyl-alpha-D-glucosamine-binding site is contributed by R94. The active-site Proton donor is the C118. C118 bears the 2-(S-cysteinyl)pyruvic acid O-phosphothioketal mark. UDP-N-acetyl-alpha-D-glucosamine contacts are provided by residues 123–127 (RPIDL), D306, and I328.

It belongs to the EPSP synthase family. MurA subfamily.

It is found in the cytoplasm. The catalysed reaction is phosphoenolpyruvate + UDP-N-acetyl-alpha-D-glucosamine = UDP-N-acetyl-3-O-(1-carboxyvinyl)-alpha-D-glucosamine + phosphate. Its pathway is cell wall biogenesis; peptidoglycan biosynthesis. In terms of biological role, cell wall formation. Adds enolpyruvyl to UDP-N-acetylglucosamine. This Clostridium tetani (strain Massachusetts / E88) protein is UDP-N-acetylglucosamine 1-carboxyvinyltransferase 2.